A 417-amino-acid chain; its full sequence is Tyrosine--tRNA ligase (417 aa).

Tyr-39 contacts L-tyrosine. The 'HIGH' region signature appears at 44-53 (PTASSLHVGH). Residues Tyr-176 and Gln-180 each coordinate L-tyrosine. The 'KMSKS' region motif lies at 236–240 (KMGKS). Lys-239 contacts ATP. Residues 350 to 416 (VGVLSLIVRA…GKKKHVLVRP (67 aa)) enclose the S4 RNA-binding domain.

It belongs to the class-I aminoacyl-tRNA synthetase family. TyrS type 1 subfamily. Homodimer.

The protein resides in the cytoplasm. It carries out the reaction tRNA(Tyr) + L-tyrosine + ATP = L-tyrosyl-tRNA(Tyr) + AMP + diphosphate + H(+). Catalyzes the attachment of tyrosine to tRNA(Tyr) in a two-step reaction: tyrosine is first activated by ATP to form Tyr-AMP and then transferred to the acceptor end of tRNA(Tyr). This is Tyrosine--tRNA ligase from Agrobacterium fabrum (strain C58 / ATCC 33970) (Agrobacterium tumefaciens (strain C58)).